The primary structure comprises 89 residues: MSLSVEAKAKIVSEFGRGENDSGSTEVQVALLTAQINHLQGHFAEHKKDHHSRRGLLRMVSQRRKLLDYLKRKDVARYAALIERLGLRR.

The protein belongs to the universal ribosomal protein uS15 family. Part of the 30S ribosomal subunit. Forms a bridge to the 50S subunit in the 70S ribosome, contacting the 23S rRNA.

One of the primary rRNA binding proteins, it binds directly to 16S rRNA where it helps nucleate assembly of the platform of the 30S subunit by binding and bridging several RNA helices of the 16S rRNA. Functionally, forms an intersubunit bridge (bridge B4) with the 23S rRNA of the 50S subunit in the ribosome. In Klebsiella pneumoniae (strain 342), this protein is Small ribosomal subunit protein uS15.